Reading from the N-terminus, the 1042-residue chain is Starch synthase 3, chloroplastic/amyloplastic (1042 aa).

A chloroplast-targeting transit peptide spans 1 to 44 (MISYFLNQDFSRKKQGRMAASGPKSSGPRGFGRRTTVGSAQKRT). The interval 1–63 (MISYFLNQDF…NATSTATNEV (63 aa)) is disordered. Residues 54–63 (NATSTATNEV) show a composition bias toward polar residues. Residues 247 to 302 (ENFLLEEKLREQEKLAKEEAERERQKEEKRRIEAQKAAIEADRAQAKAETQKRREL) are a coiled coil. Lys608 provides a ligand contact to ADP-alpha-D-glucose.

It belongs to the glycosyltransferase 1 family. Bacterial/plant glycogen synthase subfamily. Expressed in leaves and flowers.

Its subcellular location is the plastid. It is found in the chloroplast. The protein resides in the amyloplast. It carries out the reaction [(1-&gt;4)-alpha-D-glucosyl](n) + ADP-alpha-D-glucose = [(1-&gt;4)-alpha-D-glucosyl](n+1) + ADP + H(+). It functions in the pathway glycan biosynthesis; starch biosynthesis. Its function is as follows. Involved in the synthesis of glycan chains within amylopectin in leaves. May play a regulatory role in the control of starch accumulation in plastids. The sequence is that of Starch synthase 3, chloroplastic/amyloplastic (SS3) from Arabidopsis thaliana (Mouse-ear cress).